We begin with the raw amino-acid sequence, 321 residues long: uncharacterized protein (321 aa).

The Exonuclease domain maps to 130-314 (NLVYDLETTG…NDVDALIKIM (185 aa)).

This is an uncharacterized protein from Acanthamoeba polyphaga (Amoeba).